The primary structure comprises 56 residues: Large ribosomal subunit protein bL32 (56 aa).

The segment at 1 to 35 is disordered; the sequence is MAVQQNKPTRSKRGMRRSHDALTATHVSVDKTSGE.

It belongs to the bacterial ribosomal protein bL32 family.

The sequence is that of Large ribosomal subunit protein bL32 from Proteus mirabilis (strain HI4320).